The primary structure comprises 93 residues: Cobalt transport protein CbiN (93 aa).

Transmembrane regions (helical) follow at residues 5–25 (LMLL…NHGG) and 63–83 (LLFT…LGYC).

It belongs to the CbiN family. Forms an energy-coupling factor (ECF) transporter complex composed of an ATP-binding protein (A component, CbiO), a transmembrane protein (T component, CbiQ) and 2 possible substrate-capture proteins (S components, CbiM and CbiN) of unknown stoichimetry.

The protein localises to the cell inner membrane. Its pathway is cofactor biosynthesis; adenosylcobalamin biosynthesis. In terms of biological role, part of the energy-coupling factor (ECF) transporter complex CbiMNOQ involved in cobalt import. The sequence is that of Cobalt transport protein CbiN from Salmonella agona (strain SL483).